Reading from the N-terminus, the 635-residue chain is RING finger protein 207 (635 aa).

The segment at 25-64 (CPLCHGQYERPCLLDCFHDFCTGCLRGRATDGRLSCPLCQ) adopts an RING-type zinc-finger fold. The B box-type; atypical zinc finger occupies 93–145 (SEAVRCANCDLECSQQDAETTYFCNTCGQPLCARCREETHRARMFARHDIVAL). 4 residues coordinate Zn(2+): Cys-98, Cys-101, Cys-127, and His-132. A coiled-coil region spans residues 422–460 (EHCRHYEDSYRGLQVEVQNLKDQVQELHRDLTKHHSLIK). The span at 553-562 (QVPVDEHAEH) shows a compositional bias: basic and acidic residues. The disordered stretch occupies residues 553–635 (QVPVDEHAEH…SGSKGACYQA (83 aa)). Over residues 589–598 (PNGSSWSLSS) the composition is skewed to polar residues. Over residues 607–622 (NQDHLRPKLEAGDEGW) the composition is skewed to basic and acidic residues.

In terms of assembly, interacts with the core-glycosylated, but not the fully glycosylated form of KCNH2/HERG. Interacts with DNAJA1 and HSPA8. Interacts (via the C-terminus) with HSPA1A; this interaction additively increases KCNH2 expression.

It is found in the cytoplasm. In terms of biological role, plays a role in cardiac repolarization possibly by stabilizing membrane expression of the potassium channel KCNH2/HERG, or by assisting its synthesis, folding or export from the endoplasmic reticulum, in a heat shock protein-dependent manner. The protein is RING finger protein 207 (Rnf207) of Mus musculus (Mouse).